Consider the following 418-residue polypeptide: Acyl-[acyl-carrier-protein] desaturase 4, chloroplastic (418 aa).

The transit peptide at 1–70 (MASSGLAVAA…ATAAAPADTA (70 aa)) directs the protein to the chloroplast. 6 residues coordinate Fe cation: glutamate 152, glutamate 190, histidine 193, glutamate 243, glutamate 276, and histidine 279.

This sequence belongs to the fatty acid desaturase type 2 family. As to quaternary structure, homodimer. Fe(2+) is required as a cofactor.

Its subcellular location is the plastid. It localises to the chloroplast. The protein operates within lipid metabolism; fatty acid metabolism. In terms of biological role, introduces a cis double bond in the acyl chain of an acyl-[acyl-carrier protein]. This is Acyl-[acyl-carrier-protein] desaturase 4, chloroplastic from Oryza sativa subsp. japonica (Rice).